Reading from the N-terminus, the 193-residue chain is Holliday junction branch migration complex subunit RuvA (193 aa).

The interval 1–64 (MIGRIQGTLV…EDAQQLFGFA (64 aa)) is domain I. The segment at 65–139 (TETEREAFRQ…GKLAPDLGVA (75 aa)) is domain II. Residues 139-143 (AGGKP) form a flexible linker region. The tract at residues 144 to 193 (QAIETSSEVLQALLALGYSEKEALLALKQIPADTSISDGIRMGLKYLSKA) is domain III.

Belongs to the RuvA family. Homotetramer. Forms an RuvA(8)-RuvB(12)-Holliday junction (HJ) complex. HJ DNA is sandwiched between 2 RuvA tetramers; dsDNA enters through RuvA and exits via RuvB. An RuvB hexamer assembles on each DNA strand where it exits the tetramer. Each RuvB hexamer is contacted by two RuvA subunits (via domain III) on 2 adjacent RuvB subunits; this complex drives branch migration. In the full resolvosome a probable DNA-RuvA(4)-RuvB(12)-RuvC(2) complex forms which resolves the HJ.

The protein localises to the cytoplasm. The RuvA-RuvB-RuvC complex processes Holliday junction (HJ) DNA during genetic recombination and DNA repair, while the RuvA-RuvB complex plays an important role in the rescue of blocked DNA replication forks via replication fork reversal (RFR). RuvA specifically binds to HJ cruciform DNA, conferring on it an open structure. The RuvB hexamer acts as an ATP-dependent pump, pulling dsDNA into and through the RuvAB complex. HJ branch migration allows RuvC to scan DNA until it finds its consensus sequence, where it cleaves and resolves the cruciform DNA. This chain is Holliday junction branch migration complex subunit RuvA, found in Polynucleobacter necessarius subsp. necessarius (strain STIR1).